Here is a 475-residue protein sequence, read N- to C-terminus: Erythroid membrane-associated protein (475 aa).

The signal sequence occupies residues 1–29; sequence MEMASSAGSWLSGCLIPLVFLRLSVHVSG. The Ig-like V-type domain occupies 30–140; the sequence is HAGDAGKFHV…GNLSKEDTVI (111 aa). The Extracellular segment spans residues 30 to 155; sequence HAGDAGKFHV…PSVGSLSPSA (126 aa). A disulfide bridge links C50 with C126. N-linked (GlcNAc...) asparagine glycosylation is present at N132. Residues 156 to 176 form a helical membrane-spanning segment; sequence VALAVILPVLVLLIMVCLCLI. Residues 177-475 are Cytoplasmic-facing; that stretch reads WKQRRAKEKL…ALQELKAPSF (299 aa). Residues 220-418 form the B30.2/SPRY domain; that stretch reads KLKRAAANSG…LVICSELHKS (199 aa). Phosphoserine is present on S418.

The protein belongs to the immunoglobulin superfamily. BTN/MOG family. Glycosylated. As to expression, expressed in erythroid-enriched bone marrow (at protein level). Highly expressed in bone marrow and to a lower extent in leukocytes, thymus, lymph node and spleen.

It localises to the cell membrane. It is found in the cytoplasm. In terms of biological role, possible role as a cell-adhesion or receptor molecule of erythroid cells. This is Erythroid membrane-associated protein (ERMAP) from Homo sapiens (Human).